A 304-amino-acid chain; its full sequence is ATP phosphoribosyltransferase (304 aa).

Belongs to the ATP phosphoribosyltransferase family. Long subfamily. The cofactor is Mg(2+).

The protein localises to the cytoplasm. It catalyses the reaction 1-(5-phospho-beta-D-ribosyl)-ATP + diphosphate = 5-phospho-alpha-D-ribose 1-diphosphate + ATP. It functions in the pathway amino-acid biosynthesis; L-histidine biosynthesis; L-histidine from 5-phospho-alpha-D-ribose 1-diphosphate: step 1/9. With respect to regulation, feedback inhibited by histidine. Catalyzes the condensation of ATP and 5-phosphoribose 1-diphosphate to form N'-(5'-phosphoribosyl)-ATP (PR-ATP). Has a crucial role in the pathway because the rate of histidine biosynthesis seems to be controlled primarily by regulation of HisG enzymatic activity. In Xanthomonas oryzae pv. oryzae (strain MAFF 311018), this protein is ATP phosphoribosyltransferase.